Here is a 509-residue protein sequence, read N- to C-terminus: Transmembrane protein 180 (509 aa).

Over 1-10 (MGLRLLACLF) the chain is Extracellular. A helical membrane pass occupies residues 11–42 (HLPTAVIYGSLSLFVSILHNVFLLYYVDTFVS). Topologically, residues 43-54 (VYKIDKLSFWIG) are cytoplasmic. Residues 55 to 73 (ETVFLIWNSLNDPLFGWLS) form a helical membrane-spanning segment. Over 74–98 (DRVFLSTQQPGAEISSPEVVLKRLR) the chain is Extracellular. Residues 99–116 (ALSHNGPLFAISFLAFWV) traverse the membrane as a helical segment. Over 117 to 124 (AWAHPGLQ) the chain is Cytoplasmic. Residues 125-149 (FLLCLCMYDSFLTMVDLHHNALLAD) traverse the membrane as a helical segment. The Extracellular segment spans residues 150–153 (LAVS). A helical transmembrane segment spans residues 154–177 (AKDRTSLNFYCSFFSAIGSLSVFM). The Cytoplasmic portion of the chain corresponds to 178-189 (SYAVWNKEDFFS). Residues 190–221 (FRIFCIVLAFCSIVGFTLSTQLLRQRFETDGK) traverse the membrane as a helical segment. The Extracellular segment spans residues 222–259 (AKWDQESTLKELYIEKLSVPQEKRITLVEYLQQLSRHR). The chain crosses the membrane as a helical span at residues 260–287 (NFLWFVCMNLIQVFHCHFNSNFFPLFLE). Residues 288–300 (HLLSDKISVSTGS) lie on the Cytoplasmic side of the membrane. The helical transmembrane segment at 301 to 320 (FLLGISYIAPHLNNLYFLSL) threads the bilayer. Residues 321 to 325 (CRRWG) lie on the Extracellular side of the membrane. A helical transmembrane segment spans residues 326–345 (VYAVVRGLFFLKLALSVVML). At 346–353 (LAGPDQVY) the chain is on the cytoplasmic side. A helical transmembrane segment spans residues 354-388 (LLCIFIASNRVFTEGTCKLLNLVVTDLVDEDLVLN). Residues 389 to 397 (RRKQAASAL) are Extracellular-facing. A helical transmembrane segment spans residues 398–424 (LFGMVALVTKPGQTFAPLIGTWLLCVY). At 425–458 (TGYDIFQRNPLSNVVSAQPKLESDTILEPTLRQG) the chain is on the cytoplasmic side. The helical transmembrane segment at 459-477 (CFYLLVFVPITCALLQLLS) threads the bilayer. Residues 478–509 (WTQFSLHGKRLQMVKAQRQGLMQGRAPEIKMI) lie on the Extracellular side of the membrane.

Its subcellular location is the cell membrane. The polypeptide is Transmembrane protein 180 (Gallus gallus (Chicken)).